The sequence spans 338 residues: Cytochrome bd ubiquinol oxidase subunit 2 (338 aa).

The next 9 helical transmembrane spans lie at Leu7–Phe27, Ile50–Ala70, Trp75–Met95, Val119–Phe139, Ile163–Leu183, Met196–Ala216, Glu227–Ile247, Phe256–Pro276, and Ile306–Phe326.

It belongs to the cytochrome ubiquinol oxidase subunit 2 family. As to quaternary structure, heterodimer of subunits I and II. Requires heme b as cofactor. Heme d cis-diol serves as cofactor.

It localises to the cell membrane. It carries out the reaction 2 a ubiquinol + O2(in) + 4 H(+)(in) = 2 a ubiquinone + 2 H2O(in) + 4 H(+)(out). This Bacillus subtilis (strain 168) protein is Cytochrome bd ubiquinol oxidase subunit 2 (cydB).